Consider the following 302-residue polypeptide: Stanniocalcin-2 (302 aa).

The N-terminal stretch at 1 to 24 is a signal peptide; the sequence is MCAERLGHFMTLALVLATIDPARG. The disordered stretch occupies residues 23 to 44; the sequence is RGTDATNPPEGPQDRSSQQKGR. Asparagine 73 is a glycosylation site (N-linked (GlcNAc...) asparagine). Residues 218–302 form a disordered region; sequence PPTAPPERQP…EQSEYSDIRR (85 aa). The segment covering 227-264 has biased composition (basic and acidic residues); the sequence is PQVDRAKLSRAHHGEAGHHLPEPSSRETGRGAKGERGS. Residues serine 250 and serine 251 each carry the phosphoserine modification. A Phosphothreonine modification is found at threonine 254.

Belongs to the stanniocalcin family. In terms of assembly, homodimer; disulfide-linked.

It is found in the secreted. Functionally, has an anti-hypocalcemic action on calcium and phosphate homeostasis. The polypeptide is Stanniocalcin-2 (STC2) (Macaca nemestrina (Pig-tailed macaque)).